Consider the following 455-residue polypeptide: ADP-dependent glucose/glucosamine kinase (455 aa).

One can recognise an ADPK domain in the interval 2–455; the sequence is PTWEELYKNA…AFIGEFSFTL (454 aa). D-glucose is bound by residues Asp-34, Glu-88, 112–113, and His-176; that span reads GQ. Glu-195 contributes to the ADP binding site. A Mg(2+)-binding site is contributed by Glu-266. Asn-292 contributes to the ADP binding site. Glu-295 is a Mg(2+) binding site. ADP contacts are provided by residues 342–343, Val-429, and Gly-439; that span reads HT. A D-glucose-binding site is contributed by Asp-440. Asp-440 contributes to the Mg(2+) binding site. The active-site Proton acceptor is the Asp-440.

This sequence belongs to the ADP-dependent glucokinase family. As to quaternary structure, homodimer. Requires Mg(2+) as cofactor.

It localises to the cytoplasm. It carries out the reaction D-glucose + ADP = D-glucose 6-phosphate + AMP + H(+). The catalysed reaction is D-glucosamine + ADP = D-glucosamine 6-phosphate + AMP + H(+). It functions in the pathway carbohydrate degradation; glycolysis. Catalyzes the ADP-dependent phosphorylation of D-glucose to D-glucose 6-phosphate and glucosamine to glucosamine 6-phosphate. Can also use CDP as the phosphoryl group donor and D-1,5-anhydroglucitol as the phosphoryl group acceptor. This is ADP-dependent glucose/glucosamine kinase from Pyrococcus furiosus (strain ATCC 43587 / DSM 3638 / JCM 8422 / Vc1).